Reading from the N-terminus, the 435-residue chain is Actin-like protein 7A (435 aa).

The disordered stretch occupies residues 1–64 (MWAPPAAIMG…TESKAAKERP (64 aa)). The segment covering 20–31 (QAPLQTQALQTA) has biased composition (low complexity). The segment at 31–51 (ASLRDGPAKRAVWVRHTSSEP) is required for interaction with TES. Basic and acidic residues predominate over residues 55–64 (TESKAAKERP).

The protein belongs to the actin family. Interacts (via N-terminus) with TES (via LIM domain 2). Heterodimer with TES; the heterodimer interacts with ENAH to form a heterotrimer. Interacts with ACTL9. Interacts with CYLC1; the interaction may be relevant for proper acrosome attachment to the nuclear envelope. As to expression, strongly expressed in testis. Also expressed in other tissues.

It is found in the cytoplasm. It localises to the cytoskeleton. The protein resides in the golgi apparatus. Its subcellular location is the nucleus. The protein localises to the cytoplasmic vesicle. It is found in the secretory vesicle. It localises to the acrosome. In terms of biological role, essential for normal spermatogenesis and male fertility. Required for normal sperm head morphology, acroplaxome formation, acrosome attachment, and acrosome granule stability. May anchor and stabilize acrosomal adherence to the acroplaxome at least in part by facilitating the presence of F-actin in the subacrosomal space. May play an important role in formation and fusion of Golgi-derived vesicles during acrosome biogenesis. The protein is Actin-like protein 7A (ACTL7A) of Homo sapiens (Human).